The chain runs to 178 residues: Large ribosomal subunit protein uL6 (178 aa).

The protein belongs to the universal ribosomal protein uL6 family. In terms of assembly, part of the 50S ribosomal subunit.

Its function is as follows. This protein binds to the 23S rRNA, and is important in its secondary structure. It is located near the subunit interface in the base of the L7/L12 stalk, and near the tRNA binding site of the peptidyltransferase center. The polypeptide is Large ribosomal subunit protein uL6 (Francisella tularensis subsp. tularensis (strain FSC 198)).